The sequence spans 297 residues: Thoeris protein ThsA (297 aa).

The next 2 membrane-spanning stretches (helical) occupy residues 32–52 and 57–77; these read ALSI…FLDL and RLII…VQFI.

It localises to the cell membrane. Activated by a signal molecule generated by ThsB. In terms of biological role, probable membrane protein component of the Thoeris antiviral defense system, composed of ThsA and ThsB. Expression of ThsA and ThsB in B.subtilis (strain BEST7003) confers resistance to phages SBSphiC, SBSphiJ and SPO1. Activation by a signal generated by ThsB leads to phage resistance. The sequence is that of Thoeris protein ThsA from Bacillus amyloliquefaciens (strain Y2) (Bacillus amyloliquefaciens subsp. plantarum (strain B9601-Y2)).